Here is a 406-residue protein sequence, read N- to C-terminus: MASTYDTLTPEAQKGEVEIQNYTINFGPQHPAAHGVLRMVMELDGEIVERVDPHVGLLHRGTEKLIEYKTYLQALPYFDRLDYCSPLGMEHSYVLAIEKLLQLEVPLRAQYLRVLFAELTRICNHMLNIGSHVMDVGAMTPNLWLFEIREDCLNFFERASGARMHAAWFRPGGVHQDVPLKLLTDIGDWLDTRLPRLFEDAVSLFADNRIFKQRNVDVGVVSKEDALAWGFSGPMIRAAGIPWDIRKSQPYDVYDRMDFEIPVGTKGDCYDRVMVRIEEVRQSARIMKQCLSEMPEGPIASLDRKVVPPKRGEMKRSMEALIHHFKLYTEGFHVPAGDVYVATESPKGEFGVYLVSDGSNKPYRCKIRPTAFSHLQAMDFMMKGHMLADTTAILSAIDVVFGECDR.

Belongs to the complex I 49 kDa subunit family. NDH-1 is composed of 14 different subunits. Subunits NuoB, C, D, E, F, and G constitute the peripheral sector of the complex.

It is found in the cell inner membrane. It carries out the reaction a quinone + NADH + 5 H(+)(in) = a quinol + NAD(+) + 4 H(+)(out). NDH-1 shuttles electrons from NADH, via FMN and iron-sulfur (Fe-S) centers, to quinones in the respiratory chain. The immediate electron acceptor for the enzyme in this species is believed to be ubiquinone. Couples the redox reaction to proton translocation (for every two electrons transferred, four hydrogen ions are translocated across the cytoplasmic membrane), and thus conserves the redox energy in a proton gradient. The polypeptide is NADH-quinone oxidoreductase subunit D (Rhizorhabdus wittichii (strain DSM 6014 / CCUG 31198 / JCM 15750 / NBRC 105917 / EY 4224 / RW1) (Sphingomonas wittichii)).